The sequence spans 402 residues: Bacteriochlorophyllide c C-7(1)-hydroxylase (402 aa).

A Radical SAM core domain is found at 104–359; that stretch reads VIGMNQDIIN…IKYQDRFDMP (256 aa). [4Fe-4S] cluster-binding residues include Cys-120, Cys-129, and Cys-132.

It belongs to the radical SAM superfamily. [4Fe-4S] cluster serves as cofactor.

It carries out the reaction a bacteriochlorophyllide c + 2 S-adenosyl-L-methionine + H2O = a bacteriochlorophyllide e + 2 5'-deoxyadenosine + 2 L-methionine + 2 H(+). The enzyme catalyses a bacteriochlorophyllide d + 2 S-adenosyl-L-methionine + H2O = a bacteriochlorophyllide f + 2 5'-deoxyadenosine + 2 L-methionine + 2 H(+). The protein operates within porphyrin-containing compound metabolism; bacteriochlorophyll biosynthesis. In terms of biological role, involved in the biosynthesis of bacteriochlorophyll e (BChl e). Catalyzes two consecutive hydroxylation reactions of the C-7 methyl group of bacteriochlorophyllide c (BChlide c) to form a geminal diol intermediate that spontaneously dehydrates to produce the formyl group of bacteriochlorophyllide e (BChlide e). Also able to catalyze the same reaction for bacteriochlorophyllide d (BChlide d) to give rise to bacteriochlorophyllide f (BChlide f). In Chlorobaculum limnaeum, this protein is Bacteriochlorophyllide c C-7(1)-hydroxylase.